Here is a 426-residue protein sequence, read N- to C-terminus: SrfA-induced gene K protein (426 aa).

Residues 1–23 (MKKMKILSFFILSLAIIIGIVYS) form the signal peptide. N-linked (GlcNAc...) asparagine glycans are attached at residues asparagine 64, asparagine 136, asparagine 160, and asparagine 226. Laminin EGF-like domains are found at residues 325-348 (DNQCQCSVGFSGDDCRQCDNGMVL) and 384-408 (CNGTCTCLPGFSGNDCTLCGNGGEV). 3 disulfide bridges follow: cysteine 330-cysteine 339, cysteine 342-cysteine 358, and cysteine 370-cysteine 388. A glycan (N-linked (GlcNAc...) asparagine) is linked at asparagine 385.

In Dictyostelium discoideum (Social amoeba), this protein is SrfA-induced gene K protein (sigK).